Consider the following 396-residue polypeptide: Phosphopentomutase (396 aa).

Residues Asp13, Asp288, His293, Asp329, His330, and His341 each coordinate Mn(2+).

Belongs to the phosphopentomutase family. Mn(2+) is required as a cofactor.

Its subcellular location is the cytoplasm. The enzyme catalyses 2-deoxy-alpha-D-ribose 1-phosphate = 2-deoxy-D-ribose 5-phosphate. It catalyses the reaction alpha-D-ribose 1-phosphate = D-ribose 5-phosphate. Its pathway is carbohydrate degradation; 2-deoxy-D-ribose 1-phosphate degradation; D-glyceraldehyde 3-phosphate and acetaldehyde from 2-deoxy-alpha-D-ribose 1-phosphate: step 1/2. Isomerase that catalyzes the conversion of deoxy-ribose 1-phosphate (dRib-1-P) and ribose 1-phosphate (Rib-1-P) to deoxy-ribose 5-phosphate (dRib-5-P) and ribose 5-phosphate (Rib-5-P), respectively. The chain is Phosphopentomutase from Clostridium perfringens (strain 13 / Type A).